The sequence spans 315 residues: MQPESGANGTVIAEFILLGLLEAPGLQPVVFVLFLFAYLVTVRGNLSILAAVLVEPKLHTPMYFFLGNLSVLDVGCISVTVPSMLSRLLSRKRAVPCGACLTQLFFFHLFVGVDCFLLTAMAYDRFLAICRPLTYSTRMSQTVQRMLVAASWACAFTNALTHTVAMSTLNFCGPNVINHFYCDLPQLFQLSCSSTQLNELLLFAVGFIMAGTPMALIVISYIHVAAAVLRIRSVEGRKKAFSTCGSHLTVVAIFYGSGIFNYMRLGSTKLSDKDKAVGIFNTVINPMLNPIIYSFRNPDVQSAIWRMLTGRRSLA.

Residues 1-28 are Extracellular-facing; the sequence is MQPESGANGTVIAEFILLGLLEAPGLQP. The N-linked (GlcNAc...) asparagine glycan is linked to asparagine 8. The helical transmembrane segment at 29 to 52 threads the bilayer; it reads VVFVLFLFAYLVTVRGNLSILAAV. Residues 53–60 are Cytoplasmic-facing; sequence LVEPKLHT. Residues 61-82 traverse the membrane as a helical segment; it reads PMYFFLGNLSVLDVGCISVTVP. Residues 83–103 are Extracellular-facing; the sequence is SMLSRLLSRKRAVPCGACLTQ. Cysteine 100 and cysteine 192 are joined by a disulfide. A helical transmembrane segment spans residues 104-123; it reads LFFFHLFVGVDCFLLTAMAY. The Cytoplasmic segment spans residues 124–143; it reads DRFLAICRPLTYSTRMSQTV. A helical transmembrane segment spans residues 144–161; sequence QRMLVAASWACAFTNALT. The Extracellular segment spans residues 162–199; it reads HTVAMSTLNFCGPNVINHFYCDLPQLFQLSCSSTQLNE. Residues 200–223 form a helical membrane-spanning segment; the sequence is LLLFAVGFIMAGTPMALIVISYIH. Over 224 to 240 the chain is Cytoplasmic; that stretch reads VAAAVLRIRSVEGRKKA. Residues 241-264 traverse the membrane as a helical segment; the sequence is FSTCGSHLTVVAIFYGSGIFNYMR. Residues 265–275 are Extracellular-facing; the sequence is LGSTKLSDKDK. Residues 276 to 295 traverse the membrane as a helical segment; that stretch reads AVGIFNTVINPMLNPIIYSF. Over 296–315 the chain is Cytoplasmic; sequence RNPDVQSAIWRMLTGRRSLA.

The protein belongs to the G-protein coupled receptor 1 family.

The protein resides in the cell membrane. Its function is as follows. Odorant receptor. The chain is Olfactory receptor 3A1 (OR3A1) from Homo sapiens (Human).